A 150-amino-acid polypeptide reads, in one-letter code: Avidin-related protein 2 (150 aa).

The signal sequence occupies residues 1–24 (MVHATSPLLLLLLLSLALVAPSLS). The region spanning 26–147 (RKCSLTGEWD…GNNDFTRQHT (122 aa)) is the Avidin-like domain. Cys-28 and Cys-105 are oxidised to a cystine. Positions 36, 40, 57, 59, and 63 each coordinate biotin. 2 N-linked (GlcNAc...) asparagine glycosylation sites follow: Asn-67 and Asn-93. Biotin is bound by residues Ser-95, Ser-99, and Asn-140.

Homotetramer. In terms of processing, glycosylated.

Its subcellular location is the secreted. Its function is as follows. Forms a strong non-covalent specific complex with biotin. This is Avidin-related protein 2 (AVR2) from Gallus gallus (Chicken).